The primary structure comprises 395 residues: Multidrug resistance protein MdtL (395 aa).

Residues 1 to 3 (MKR) lie on the Cytoplasmic side of the membrane. The helical transmembrane segment at 4–24 (FLLCSFALVLLYPAGIDMYLV) threads the bilayer. Residues 25 to 41 (GLPRIAADLNASEAQLH) lie on the Periplasmic side of the membrane. Residues 42–62 (IAFSVYLAGMATAMLFAGKIA) traverse the membrane as a helical segment. The Cytoplasmic segment spans residues 63–68 (DQSGRK). The chain crosses the membrane as a helical span at residues 69–89 (PVAIVGAIVFMMASLLCSRAS). Residues 90–92 (EGS) are Periplasmic-facing. The helical transmembrane segment at 93–113 (LFLSGRFLQGVGAGGCYVVAF) threads the bilayer. The Cytoplasmic segment spans residues 114–130 (AILRDTLDEHRRAKVLS). The chain crosses the membrane as a helical span at residues 131 to 151 (LLNGITCIVPVLAPVMGHLIM). Over 152 to 157 (LRFPWQ) the chain is Periplasmic. A helical transmembrane segment spans residues 158 to 178 (SLFYTMSTMGIMVGLLSLFIL). Topologically, residues 179–216 (RETRPARLAPRDLSPSSSAAESLVNRFFVSRLAITTLS) are cytoplasmic. The helical transmembrane segment at 217 to 237 (VSVILTFVNASPVLLMEVMGF) threads the bilayer. Topologically, residues 238 to 246 (SRGDYAITM) are periplasmic. The chain crosses the membrane as a helical span at residues 247–267 (ALTAGVSMVVSFSTPFALGLF). The Cytoplasmic portion of the chain corresponds to 268-270 (KPR). The chain crosses the membrane as a helical span at residues 271–291 (TLMLVSQGLFLTAGVTLSLAH). The Periplasmic segment spans residues 292-294 (TNT). Residues 295–315 (VTLFGLTLICAGFSVGFGVAM) form a helical membrane-spanning segment. At 316-332 (SQALGPFSLRAGVASST) the chain is on the cytoplasmic side. The chain crosses the membrane as a helical span at residues 333–353 (LGIAQVCGSSLWIWLAAILGI). Residues 354–357 (SAMN) lie on the Periplasmic side of the membrane. The helical transmembrane segment at 358-378 (MLIGILIGCSIVSILLIFSVA) threads the bilayer. Residues 379–395 (PNRSVAEHEEIPYQSRS) lie on the Cytoplasmic side of the membrane.

This sequence belongs to the major facilitator superfamily. DHA1 family. MdtL (TC 2.A.1.2.22) subfamily.

The protein localises to the cell inner membrane. This chain is Multidrug resistance protein MdtL (mdtL), found in Salmonella typhi.